We begin with the raw amino-acid sequence, 354 residues long: Protein RecA (354 aa).

ATP is bound at residue 78–85; sequence GPESSGKT.

It belongs to the RecA family.

The protein resides in the cytoplasm. In terms of biological role, can catalyze the hydrolysis of ATP in the presence of single-stranded DNA, the ATP-dependent uptake of single-stranded DNA by duplex DNA, and the ATP-dependent hybridization of homologous single-stranded DNAs. It interacts with LexA causing its activation and leading to its autocatalytic cleavage. This is Protein RecA from Zymomonas mobilis subsp. mobilis (strain ATCC 31821 / ZM4 / CP4).